We begin with the raw amino-acid sequence, 177 residues long: Large ribosomal subunit protein uL5 (177 aa).

It belongs to the universal ribosomal protein uL5 family. In terms of assembly, part of the 50S ribosomal subunit. Interacts with protein L18 and the 5S rRNA, and probably with tRNAs. Forms a bridge to the 30S subunit in the 70S ribosome.

Its function is as follows. This is 1 of 5 proteins that mediates the attachment of the 5S rRNA onto the large ribosomal subunit, stabilizing the orientation of adjacent RNA domains. Forms part of the central protuberance. Modeling places the A and P site tRNAs in close proximity to this protein; the 5S rRNA and some of its associated proteins might help stabilize positioning of ribosome-bound tRNAs. In the 70S ribosome it is thought to contact protein S13 of the 30S subunit (bridge B1b), connecting the 2 subunits; this bridge is implicated in subunit movement. In Haloarcula marismortui (strain ATCC 43049 / DSM 3752 / JCM 8966 / VKM B-1809) (Halobacterium marismortui), this protein is Large ribosomal subunit protein uL5 (rpl5).